A 744-amino-acid polypeptide reads, in one-letter code: Cell surface receptor daf-4 (744 aa).

The N-terminal stretch at 1–31 is a signal peptide; that stretch reads MNQKGTVRLKALVLICLPLFLIATPVPVAVT. The Extracellular portion of the chain corresponds to 48–253; sequence WANTLVSKVA…IALLILAYVG (206 aa). N-linked (GlcNAc...) asparagine glycans are attached at residues asparagine 60, asparagine 134, and asparagine 165. A helical transmembrane segment spans residues 254–274; that stretch reads WKFQQNKKEEIKKQQKIKFDM. The Cytoplasmic segment spans residues 275 to 744; sequence EKTDALEAGN…PSGTFGTFTT (470 aa). The Protein kinase domain maps to 306–603; that stretch reads ITDFQLISKG…FARVWNHIMS (298 aa). ATP contacts are provided by residues 312–320 and lysine 338; that span reads ISKGRFGKV. Aspartate 440 functions as the Proton acceptor in the catalytic mechanism. 2 disordered regions span residues 605-686 and 724-744; these read PDSS…PEPE and AGAD…TFTT. Residues 620–639 show a composition bias toward basic and acidic residues; that stretch reads RGVDDVEQSEKPEGIEEMQH. The segment covering 731 to 744 has biased composition (low complexity); it reads STPTPSGTFGTFTT.

This sequence belongs to the protein kinase superfamily. TKL Ser/Thr protein kinase family. TGFB receptor subfamily. As to quaternary structure, may interact with daf-1 to regulate dauer larva development. Interacts with sma-10. As to expression, pharynx, intestine, hypodermis and body wall muscles in L1 through to adult stages. Also expressed in head neurons, ventral cord and tail neurons. Subset of head neurons show coexpression with daf-1 when dauer/nondauer decision is made.

It localises to the cell membrane. The enzyme catalyses L-threonyl-[receptor-protein] + ATP = O-phospho-L-threonyl-[receptor-protein] + ADP + H(+). The catalysed reaction is L-seryl-[receptor-protein] + ATP = O-phospho-L-seryl-[receptor-protein] + ADP + H(+). Involved in a TGF-beta pathway. May be a receptor for TGF-beta-like ligand daf-7. Controls the decision of whether or not larvae enter a developmentally arrested state, known as dauer, in response to environmental conditions. Regulates body size and male tail patterning. Involved in regulating entry into quiescence triggered by satiety. Involved in sensitivity to CO2 levels. The polypeptide is Cell surface receptor daf-4 (Caenorhabditis elegans).